The primary structure comprises 587 residues: Nucleoporin p58/p45 (587 aa).

5 consecutive repeat copies span residues 7–8 (FG), 30–31 (FG), 44–45 (FG), 63–64 (FG), and 68–69 (FG). Positions 7-567 (FGSGTLGSTT…VSNPASAGFG (561 aa)) are 14 X 2 AA repeats of F-G. Residues 196–236 (TSAASNEGLGGIDFSTSSDKKSDKTGTRPEDSKALKDENLP) form a disordered region. Positions 213 to 234 (SDKKSDKTGTRPEDSKALKDEN) are enriched in basic and acidic residues. 2 coiled-coil regions span residues 244–264 (ENLQ…SRMS) and 302–369 (ETAQ…SHIT). Thr319 is modified (phosphothreonine). 9 tandem repeats follow at residues 476–477 (FG), 480–481 (FG), 501–502 (FG), 507–508 (FG), 517–518 (FG), 519–520 (FG), 533–534 (FG), 556–557 (FG), and 566–567 (FG). A disordered region spans residues 565–587 (GFGTGGQLLQLKRPPAGNKRGKR).

This sequence belongs to the NUP58 family. As to quaternary structure, component of the p62 complex, a complex at least composed of NUP62, NUP54, and NUP58. Interacts with NUTF2. Interacts with SRP1-alpha and Importin p97 proteins when they are together, but not with SRP1-alpha protein alone. Post-translationally, O-glycosylated.

The protein localises to the nucleus. It localises to the nuclear pore complex. It is found in the nucleus membrane. Functionally, component of the nuclear pore complex, a complex required for the trafficking across the nuclear membrane. In Mus musculus (Mouse), this protein is Nucleoporin p58/p45.